The following is a 551-amino-acid chain: MAFNDLLKQVGGVGRFQLIQVTMVVAPLLLMASHNTLQNFTAAIPPHHCRPPANANLSKDGGLEAWLPLDKQGQPESCLRFTSPQWGPPFYNGTEANGTRVTEPCIDGWVYDNSTFPSTIVTEWNLVCSHRAFRQLAQSLYMVGVLLGAMVFGYLADRLGRRKVLILNYLQTAVSGTCAAYAPNYTVYCVFRLLSGMSLASIAINCMTLNVEWMPIHTRAYVGTLIGYVYSLGQFLLAGIAYAVPHWRHLQLVVSVPFFIAFIYSWFFIESARWYSSSGRLDLTLRALQRVARINGKQEEGAKLSIEVLRTSLQKELTLSKGQASAMELLRCPTLRHLFLCLSMLWFATSFAYYGLVMDLQGFGVSMYLIQVIFGAVDLPAKFVCFLVINSMGRRPAQMASLLLAGICILVNGIIPKSHTIIRTSLAVLGKGCLASSFNCIFLYTGELYPTVIRQTGLGMGSTMARVGSIVSPLVSMTAEFYPSMPLFIFGAVPVVASAVTALLPETLGQPLPDTVQDLKSRSRGKQNQQQQEQQKQMMPLQASTQEKNGL.

Residues 1–9 (MAFNDLLKQ) lie on the Cytoplasmic side of the membrane. The chain crosses the membrane as a helical span at residues 10–30 (VGGVGRFQLIQVTMVVAPLLL). The Extracellular segment spans residues 31–135 (MASHNTLQNF…LVCSHRAFRQ (105 aa)). N-linked (GlcNAc...) asparagine glycosylation is found at Asn39, Asn56, Asn92, and Asn113. A helical transmembrane segment spans residues 136 to 156 (LAQSLYMVGVLLGAMVFGYLA). Over 157–164 (DRLGRRKV) the chain is Cytoplasmic. The helical transmembrane segment at 165 to 187 (LILNYLQTAVSGTCAAYAPNYTV) threads the bilayer. The Extracellular portion of the chain corresponds to 188–195 (YCVFRLLS). Residues 196-216 (GMSLASIAINCMTLNVEWMPI) traverse the membrane as a helical segment. The Cytoplasmic segment spans residues 217 to 224 (HTRAYVGT). The chain crosses the membrane as a helical span at residues 225–245 (LIGYVYSLGQFLLAGIAYAVP). Topologically, residues 246-248 (HWR) are extracellular. Residues 249–269 (HLQLVVSVPFFIAFIYSWFFI) traverse the membrane as a helical segment. Topologically, residues 270–337 (ESARWYSSSG…ELLRCPTLRH (68 aa)) are cytoplasmic. Residues 338 to 358 (LFLCLSMLWFATSFAYYGLVM) traverse the membrane as a helical segment. Topologically, residues 359 to 368 (DLQGFGVSMY) are extracellular. A helical membrane pass occupies residues 369-389 (LIQVIFGAVDLPAKFVCFLVI). Residues 390 to 395 (NSMGRR) lie on the Cytoplasmic side of the membrane. The helical transmembrane segment at 396–416 (PAQMASLLLAGICILVNGIIP) threads the bilayer. The Extracellular segment spans residues 417–425 (KSHTIIRTS). Residues 426–446 (LAVLGKGCLASSFNCIFLYTG) form a helical membrane-spanning segment. Over 447-484 (ELYPTVIRQTGLGMGSTMARVGSIVSPLVSMTAEFYPS) the chain is Cytoplasmic. The helical transmembrane segment at 485 to 505 (MPLFIFGAVPVVASAVTALLP) threads the bilayer. At 506–551 (ETLGQPLPDTVQDLKSRSRGKQNQQQQEQQKQMMPLQASTQEKNGL) the chain is on the extracellular side. A disordered region spans residues 514–551 (DTVQDLKSRSRGKQNQQQQEQQKQMMPLQASTQEKNGL). A compositionally biased stretch (low complexity) spans 526-537 (KQNQQQQEQQKQ). The segment covering 542–551 (QASTQEKNGL) has biased composition (polar residues).

Belongs to the major facilitator (TC 2.A.1) superfamily. Organic cation transporter (TC 2.A.1.19) family. In terms of processing, glycosylated. Glycosylation is necessary for proper targeting of the transporter to the plasma membrane. Highly expressed in kidney; in the particular segment of the proximal tubule. In kidney, found preferentially in the cortex and outer medulla and weakly in the inner medulla. Expressed to a lower extent in brain.

The protein localises to the cell membrane. Its subcellular location is the basolateral cell membrane. It is found in the basal cell membrane. It catalyses the reaction (6R)-L-erythro-5,6,7,8-tetrahydrobiopterin(out) + a dicarboxylate(in) = (6R)-L-erythro-5,6,7,8-tetrahydrobiopterin(in) + a dicarboxylate(out). The enzyme catalyses L-erythro-7,8-dihydrobiopterin(out) + a dicarboxylate(in) = L-erythro-7,8-dihydrobiopterin(in) + a dicarboxylate(out). The catalysed reaction is L-sepiapterin(out) + a dicarboxylate(in) = L-sepiapterin(in) + a dicarboxylate(out). It carries out the reaction prostaglandin F2alpha(out) + a dicarboxylate(in) = prostaglandin F2alpha(in) + a dicarboxylate(out). It catalyses the reaction prostaglandin E2(out) + a dicarboxylate(in) = prostaglandin E2(in) + a dicarboxylate(out). The enzyme catalyses 3',5'-cyclic AMP(out) + a dicarboxylate(in) = 3',5'-cyclic AMP(in) + a dicarboxylate(out). The catalysed reaction is 3',5'-cyclic GMP(out) + a dicarboxylate(in) = 3',5'-cyclic GMP(in) + a dicarboxylate(out). It carries out the reaction urate(out) + a dicarboxylate(in) = urate(in) + a dicarboxylate(out). It catalyses the reaction kynurenate(out) + glutarate(in) = kynurenate(in) + glutarate(out). The enzyme catalyses (indol-3-yl)acetate(out) + a dicarboxylate(in) = (indol-3-yl)acetate(in) + a dicarboxylate(out). The catalysed reaction is indoxyl sulfate(out) + a dicarboxylate(in) = indoxyl sulfate(in) + a dicarboxylate(out). It carries out the reaction N-benzoylglycine(out) + a dicarboxylate(in) = N-benzoylglycine(in) + a dicarboxylate(out). It catalyses the reaction 3-carboxy-4-methyl-5-propyl-2-furanpropanoate(out) + a dicarboxylate(in) = 3-carboxy-4-methyl-5-propyl-2-furanpropanoate(in) + a dicarboxylate(out). Functionally, secondary active transporter that functions as a Na(+)-independent organic anion (OA)/dicarboxylate antiporter where the uptake of one molecule of OA into the cell is coupled with an efflux of one molecule of intracellular dicarboxylate such as alpha-ketoglutarate or glutarate. Mediates the uptake of OA across the basolateral side of proximal tubule epithelial cells, thereby contributing to the renal elimination of endogenous OA from the systemic circulation into the urine. Function as a biopterin transporters involved in the uptake and the secretion of coenzymes tetrahydrobiopterin (BH4) dihydrobiopterin (BH2) and sepiapterin to urine, thereby determining baseline levels of blood biopterins. Transports prostaglandin E2 (PGE2) and prostaglandin F2-alpha (PGF2-alpha) and may contribute to their renal excretion. Also mediates the uptake of cyclic nucleotides such as cAMP and cGMP. Involved in the transport of neuroactive tryptophan metabolites kynurenate (KYNA) and xanthurenate (XA) and may contribute to their secretion from the brain. May transport glutamate. Also involved in the disposition of uremic toxins and potentially toxic xenobiotics by the renal organic anion secretory pathway, helping reduce their undesired toxicological effects on the body. Uremic toxins include the indoxyl sulfate (IS), hippurate, indole acetate (IA), 3-carboxy-4- methyl-5-propyl-2-furanpropionate(CMPF) and urate. Xenobiotics include the mycotoxin ochratoxin (OTA). May also contribute to the transport of organic compounds in testes across the blood-testis-barrier. May also work as a bidirectional OA/dicarboxylate exchanger. This Rattus norvegicus (Rat) protein is Solute carrier family 22 member 6.